Reading from the N-terminus, the 292-residue chain is Universal stress protein Mb2346c (292 aa).

This sequence belongs to the universal stress protein A family.

The polypeptide is Universal stress protein Mb2346c (Mycobacterium bovis (strain ATCC BAA-935 / AF2122/97)).